Reading from the N-terminus, the 134-residue chain is Small ribosomal subunit protein uS8 (134 aa).

This sequence belongs to the universal ribosomal protein uS8 family. Part of the 30S ribosomal subunit. Contacts proteins S5 and S12.

Its function is as follows. One of the primary rRNA binding proteins, it binds directly to 16S rRNA central domain where it helps coordinate assembly of the platform of the 30S subunit. This is Small ribosomal subunit protein uS8 from Pseudothermotoga lettingae (strain ATCC BAA-301 / DSM 14385 / NBRC 107922 / TMO) (Thermotoga lettingae).